The following is a 370-amino-acid chain: Cyanuric acid amidohydrolase (370 aa).

The interval 1 to 106 (MRTTSVGVFK…TVFTRREVER (106 aa)) is RU A. Substrate is bound by residues arginine 54 and 85-86 (SG). Residues 115–251 (RLSIGMAHTR…NVVIVLGNSA (137 aa)) are RU B. The active site involves lysine 165. Substrate is bound by residues arginine 197 and 234–235 (SA). Catalysis depends on serine 234, which acts as the Nucleophile. Residues 257–370 (FEIGHAVMND…PVAVIARLSD (114 aa)) are RU C. Position 302 (glutamate 302) interacts with Mg(2+). Residues arginine 329 and 348–349 (SG) each bind substrate. Mg(2+) is bound by residues alanine 351, glutamine 354, glycine 355, proline 356, and glycine 359.

It belongs to the cyclic amide hydrolase (CyAH) family. In terms of assembly, homotetramer.

It catalyses the reaction cyanurate + H2O = 1-carboxybiuret + H(+). It functions in the pathway xenobiotic degradation; atrazine degradation; biuret from cyanurate: step 1/1. Its activity is regulated as follows. Inhibited by barbituric acid. Functionally, responsible for the hydrolysis of cyanuric acid, an intermediate formed during catabolism of s-triazine based compounds in herbicides such as atrazine and polymers such as melamine. Catalyzes the hydrolytic opening of the s-triazine ring of cyanuric acid (2,4,6-trihydroxy-s-triazine) to yield carbon dioxide and carboxybiuret, which spontaneously decarboxylates to biuret. The chain is Cyanuric acid amidohydrolase from Bradyrhizobium diazoefficiens (strain JCM 10833 / BCRC 13528 / IAM 13628 / NBRC 14792 / USDA 110).